The following is a 339-amino-acid chain: NADH-quinone oxidoreductase subunit H (339 aa).

The next 8 helical transmembrane spans lie at 9-29, 82-102, 115-135, 161-181, 187-207, 235-255, 275-295, and 311-331; these read IFPL…LILC, ILFV…WAVI, VGVL…IIAG, MGLV…SQIV, MPWW…ISVL, MGFA…SAMT, IPGF…FLWI, and GWKV…SVLI.

This sequence belongs to the complex I subunit 1 family. In terms of assembly, NDH-1 is composed of 14 different subunits. Subunits NuoA, H, J, K, L, M, N constitute the membrane sector of the complex.

The protein localises to the cell inner membrane. The enzyme catalyses a quinone + NADH + 5 H(+)(in) = a quinol + NAD(+) + 4 H(+)(out). Functionally, NDH-1 shuttles electrons from NADH, via FMN and iron-sulfur (Fe-S) centers, to quinones in the respiratory chain. The immediate electron acceptor for the enzyme in this species is believed to be ubiquinone. Couples the redox reaction to proton translocation (for every two electrons transferred, four hydrogen ions are translocated across the cytoplasmic membrane), and thus conserves the redox energy in a proton gradient. This subunit may bind ubiquinone. The sequence is that of NADH-quinone oxidoreductase subunit H from Rickettsia bellii (strain OSU 85-389).